The sequence spans 394 residues: Ceramide glucosyltransferase (394 aa).

Residues 1–10 (MALLDLALEG) are Lumenal-facing. The chain crosses the membrane as a helical span at residues 11–32 (MAVFGFVLFLVLWLMHFMAIIY). Residues 33–195 (TRLHLNKKAT…QVYFGTSHPR (163 aa)) are Cytoplasmic-facing. Residue Asp92 is a short sequence motif, D1. Residue Lys117 is modified to N6-acetyllysine. A short sequence motif (D2) is located at residue Asp144. Residues 196–215 (YYISANVTGFKCVTGMSCLM) form a helical membrane-spanning segment. At 216-287 (RKDVLDQAGG…KLRINMLPAT (72 aa)) the chain is on the lumenal side. A short sequence motif (D3) is located at residue Asp236. Residue Asp236 is the Proton acceptor of the active site. The short motif at 272 to 276 (RMIRW) is the (Q/R)XXRW element. Residues 288-304 (IICEPISECFVASLIIG) form a helical membrane-spanning segment. Residues 305-309 (WAAHH) are Cytoplasmic-facing. The chain crosses the membrane as a helical span at residues 310–328 (VFRWDIMVFFMCHCLAWFI). The Lumenal segment spans residues 329–348 (FDYIQLRGVQGGTLCFSKLD). A helical membrane pass occupies residues 349 to 369 (YAVAWFIRESMTIYIFLSALW). At 370–394 (DPTISWRTGRYRLRCGGTAEEILDV) the chain is on the cytoplasmic side.

The protein belongs to the glycosyltransferase 2 family. Interacts with RTN1; regulates the ceramide glucosyltransferase activity of UGCG. Found in all tissues examined.

The protein localises to the golgi apparatus membrane. The catalysed reaction is an N-acylsphing-4-enine + UDP-alpha-D-glucose = a beta-D-glucosyl-(1&lt;-&gt;1')-N-acylsphing-4-enine + UDP + H(+). It carries out the reaction UDP-alpha-D-xylose + an N-acylsphing-4-enine = a beta-D-xylosyl-(1&lt;-&gt;1')-N-acylsphing-4-enine + UDP + H(+). The enzyme catalyses N-(9Z-octadecenoyl)-sphing-4-enine + UDP-alpha-D-xylose = beta-D-xylosyl-(1&lt;-&gt;1')-N-(9Z-octadecenoyl)-sphing-4-enine + UDP + H(+). Its pathway is lipid metabolism; sphingolipid metabolism. Its function is as follows. Participates in the initial step of the glucosylceramide-based glycosphingolipid/GSL synthetic pathway at the cytosolic surface of the Golgi. Catalyzes the transfer of glucose from UDP-glucose to ceramide to produce glucosylceramide/GlcCer (such as beta-D-glucosyl-(1&lt;-&gt;1')-N-acylsphing-4-enine). GlcCer is the core component of glycosphingolipids/GSLs, amphipathic molecules consisting of a ceramide lipid moiety embedded in the outer leaflet of the membrane, linked to one of hundreds of different externally oriented oligosaccharide structures. Glycosphingolipids are essential components of membrane microdomains that mediate membrane trafficking and signal transduction, implicated in many fundamental cellular processes, including growth, differentiation, migration, morphogenesis, cell-to-cell and cell-to-matrix interactions. They are required for instance in the proper development and functioning of the nervous system. As an example of their role in signal transduction, they regulate the leptin receptor/LEPR in the leptin-mediated signaling pathway. They also play an important role in the establishment of the skin barrier regulating keratinocyte differentiation and the proper assembly of the cornified envelope. The biosynthesis of GSLs is also required for the proper intestinal endocytic uptake of nutritional lipids. Catalyzes the synthesis of xylosylceramide/XylCer (such as beta-D-xylosyl-(1&lt;-&gt;1')-N-acylsphing-4-enine) using UDP-Xyl as xylose donor. The protein is Ceramide glucosyltransferase of Homo sapiens (Human).